The primary structure comprises 513 residues: ATP synthase subunit alpha (513 aa).

ATP is bound at residue 169-176 (GDRQTGKT).

This sequence belongs to the ATPase alpha/beta chains family. In terms of assembly, F-type ATPases have 2 components, CF(1) - the catalytic core - and CF(0) - the membrane proton channel. CF(1) has five subunits: alpha(3), beta(3), gamma(1), delta(1), epsilon(1). CF(0) has three main subunits: a(1), b(2) and c(9-12). The alpha and beta chains form an alternating ring which encloses part of the gamma chain. CF(1) is attached to CF(0) by a central stalk formed by the gamma and epsilon chains, while a peripheral stalk is formed by the delta and b chains.

The protein localises to the cell inner membrane. It catalyses the reaction ATP + H2O + 4 H(+)(in) = ADP + phosphate + 5 H(+)(out). In terms of biological role, produces ATP from ADP in the presence of a proton gradient across the membrane. The alpha chain is a regulatory subunit. This is ATP synthase subunit alpha from Ruegeria sp. (strain TM1040) (Silicibacter sp.).